The sequence spans 766 residues: FYVE, RhoGEF and PH domain-containing protein 4 (766 aa).

3 disordered regions span residues 1 to 20, 46 to 83, and 134 to 188; these read MEEI…PSKV, NLNA…DKTQ, and ETAT…ESPL. The actin filament-binding stretch occupies residues 1 to 150; the sequence is MEEIKPASAS…SPTTDSCDGN (150 aa). Composition is skewed to polar residues over residues 58-83 and 145-157; these read LTTT…DKTQ and DSCD…SSYR. Positions 167-184 are enriched in basic and acidic residues; sequence LEERGAETETKVQERENG. The DH domain occupies 206-393; sequence KLHKIANELL…STAASHSNSA (188 aa). Positions 422–521 constitute a PH 1 domain; it reads ELIKEGQILK…WIKALQETID (100 aa). The FYVE-type zinc finger occupies 559–619; sequence DNEVTMCMKC…VCKDCYQIIS (61 aa). Zn(2+) is bound by residues cysteine 565, cysteine 568, cysteine 582, cysteine 585, cysteine 590, cysteine 593, cysteine 611, and cysteine 614. The PH 2 domain maps to 643–740; that stretch reads NSVVCSFLQY…WLKVILLAVT (98 aa). 2 positions are modified to phosphoserine: serine 702 and serine 716. The interval 742 to 766 is disordered; the sequence is ETPGGPNEHPATLDDHPEPKKKSEC. Residues 752-766 show a composition bias toward basic and acidic residues; it reads ATLDDHPEPKKKSEC.

As to quaternary structure, homooligomer. As to expression, expressed in different tissues, including brain, cerebellum, peripheral nerve, skeletal muscle, heart, uterus, placenta and testis.

It localises to the cytoplasm. The protein resides in the cytoskeleton. Its subcellular location is the cell projection. The protein localises to the filopodium. In terms of biological role, activates CDC42, a member of the Ras-like family of Rho- and Rac proteins, by exchanging bound GDP for free GTP. Plays a role in regulating the actin cytoskeleton and cell shape. Activates MAPK8. The sequence is that of FYVE, RhoGEF and PH domain-containing protein 4 (FGD4) from Homo sapiens (Human).